We begin with the raw amino-acid sequence, 424 residues long: Adenylosuccinate synthetase (424 aa).

GTP-binding positions include 12–18 (GDEGKGK) and 40–42 (GHT). The Proton acceptor role is filled by aspartate 13. Aspartate 13 and glycine 40 together coordinate Mg(2+). Residues 13 to 16 (DEGK), 38 to 41 (NAGH), threonine 130, arginine 144, asparagine 220, threonine 235, and arginine 299 contribute to the IMP site. The Proton donor role is filled by histidine 41. Substrate is bound at residue 295-301 (VTTGRRR). Residues arginine 301, 327 to 329 (KLD), and 412 to 414 (GTG) contribute to the GTP site.

Belongs to the adenylosuccinate synthetase family. In terms of assembly, homodimer. It depends on Mg(2+) as a cofactor.

Its subcellular location is the cytoplasm. It carries out the reaction IMP + L-aspartate + GTP = N(6)-(1,2-dicarboxyethyl)-AMP + GDP + phosphate + 2 H(+). Its pathway is purine metabolism; AMP biosynthesis via de novo pathway; AMP from IMP: step 1/2. Its function is as follows. Plays an important role in the de novo pathway and in the salvage pathway of purine nucleotide biosynthesis. Catalyzes the first committed step in the biosynthesis of AMP from IMP. This Aspergillus clavatus (strain ATCC 1007 / CBS 513.65 / DSM 816 / NCTC 3887 / NRRL 1 / QM 1276 / 107) protein is Adenylosuccinate synthetase.